The following is a 118-amino-acid chain: Large ribosomal subunit protein bL20 (118 aa).

The protein belongs to the bacterial ribosomal protein bL20 family.

Functionally, binds directly to 23S ribosomal RNA and is necessary for the in vitro assembly process of the 50S ribosomal subunit. It is not involved in the protein synthesizing functions of that subunit. This Caldicellulosiruptor saccharolyticus (strain ATCC 43494 / DSM 8903 / Tp8T 6331) protein is Large ribosomal subunit protein bL20.